The chain runs to 276 residues: Putative translation initiation factor eIF-2B subunit 2-like (276 aa).

The protein belongs to the eIF-2B alpha/beta/delta subunits family. As to quaternary structure, complex of two different subunits.

Its function is as follows. Catalyzes the exchange of initiation factor 2-bound GDP for GTP. The sequence is that of Putative translation initiation factor eIF-2B subunit 2-like from Pyrococcus horikoshii (strain ATCC 700860 / DSM 12428 / JCM 9974 / NBRC 100139 / OT-3).